Consider the following 47-residue polypeptide: PhoP/PhoQ regulator MgrB (47 aa).

The helical transmembrane segment at 6 to 26 (WVLLIVIIAGCLLLWTQMLNV) threads the bilayer.

This sequence belongs to the MgrB family. In terms of assembly, may form homooligomers. Probably interacts with the periplasmic domain of PhoQ.

The protein resides in the cell inner membrane. Functionally, phoP-regulated transcription is redox-sensitive, being activated when the periplasm becomes more reducing. MgrB acts between DsbA/DsbB and PhoP/PhoQ in this pathway. Represses PhoP/PhoQ signaling, possibly by binding to the periplasmic domain of PhoQ, altering its activity and that of downstream effector PhoP. In Klebsiella pneumoniae (strain 342), this protein is PhoP/PhoQ regulator MgrB.